The sequence spans 843 residues: Glycogen phosphorylase, brain form (843 aa).

Ala-2 carries the post-translational modification N-acetylalanine. Ser-15 is subject to Phosphoserine; by PHK; in form phosphorylase A. Residues Asp-43, Tyr-197, and Arg-310 each coordinate AMP. Tyr-197 carries the post-translational modification Phosphotyrosine. Residue Tyr-473 is modified to Phosphotyrosine. Lys-569 is a binding site for pyridoxal 5'-phosphate. The interval 677-678 (TG) is pyridoxal 5'-phosphate. Lys-681 bears the N6-(pyridoxal phosphate)lysine mark.

The protein belongs to the glycogen phosphorylase family. In terms of assembly, homodimer. Dimers associate into a tetramer to form the enzymatically active phosphorylase A. Pyridoxal 5'-phosphate is required as a cofactor. Phosphorylation of Ser-15 converts phosphorylase B (unphosphorylated) to phosphorylase A.

The catalysed reaction is [(1-&gt;4)-alpha-D-glucosyl](n) + phosphate = [(1-&gt;4)-alpha-D-glucosyl](n-1) + alpha-D-glucose 1-phosphate. Its activity is regulated as follows. Activity of phosphorylase is controlled both by allosteric means (through the non-covalent binding of metabolites) and by covalent modification. Thus AMP allosterically activates, whereas ATP, ADP, and glucose-6-phosphate allosterically inhibit, phosphorylase B. In terms of biological role, glycogen phosphorylase that regulates glycogen mobilization. Phosphorylase is an important allosteric enzyme in carbohydrate metabolism. Enzymes from different sources differ in their regulatory mechanisms and in their natural substrates. However, all known phosphorylases share catalytic and structural properties. In Bos taurus (Bovine), this protein is Glycogen phosphorylase, brain form (PYGB).